Consider the following 659-residue polypeptide: Checkpoint protein RAD24 (659 aa).

The segment at 24 to 54 is disordered; the sequence is TKWSSSRPTSPVRKARSTENDFLSKQDTSSI. 109-116 provides a ligand contact to ATP; sequence GPSGCSKS. A compositionally biased stretch (acidic residues) spans 596–612; that stretch reads EDEETSFNDDPIVDSDS. Residues 596-659 form a disordered region; sequence EDEETSFNDD…SLSDSDLEIL (64 aa). Residues S652 and S654 each carry the phosphoserine modification.

This sequence belongs to the rad17/RAD24 family. In terms of assembly, component of the RAD24-RFC complex which consists of RAD14, RFC2, RFC3, RFC4 and RFC5 and associates with the checkpoint clamp DDC1:MEC3:RAD17 complex. RAD24 interacts with ECO1.

It is found in the nucleus. In terms of biological role, participates in checkpoint pathways arrest of the cell cycle, a mechanism that allows the DNA repair pathways to act to restore the integrity of the DNA prior to DNA synthesis or separation of the replicated chromosomes. Regulates the DNA damage checkpoint pathway throughout the cell cycle, when associated with RCF5. Component of the RFC-like RAD24-RFC complex which loads the checkpoint clamp DDC1:MEC3:RAD17 complex and is involved in DNA repair pathways. During a clamp loading circle, the RFC:clamp complex binds to DNA and the recognition of the double-stranded/single-stranded junction stimulates ATP hydrolysis by RFC. The complex presumably provides bipartite ATP sites in which one subunit supplies a catalytic site for hydrolysis of ATP bound to the neighboring subunit. Dissociation of RFC from the clamp leaves the clamp encircling DNA. The sequence is that of Checkpoint protein RAD24 (RAD24) from Saccharomyces cerevisiae (strain ATCC 204508 / S288c) (Baker's yeast).